Here is a 428-residue protein sequence, read N- to C-terminus: Histidinol dehydrogenase (428 aa).

Substrate is bound by residues Ser-232, Gln-254, and His-257. Zn(2+)-binding residues include Gln-254 and His-257. Catalysis depends on proton acceptor residues Glu-324 and His-325. Substrate contacts are provided by His-325, Asp-358, Glu-412, and His-417. Zn(2+) is bound at residue Asp-358. His-417 is a binding site for Zn(2+).

Belongs to the histidinol dehydrogenase family. Zn(2+) is required as a cofactor.

It catalyses the reaction L-histidinol + 2 NAD(+) + H2O = L-histidine + 2 NADH + 3 H(+). It participates in amino-acid biosynthesis; L-histidine biosynthesis; L-histidine from 5-phospho-alpha-D-ribose 1-diphosphate: step 9/9. Its function is as follows. Catalyzes the sequential NAD-dependent oxidations of L-histidinol to L-histidinaldehyde and then to L-histidine. The sequence is that of Histidinol dehydrogenase from Thermotoga maritima (strain ATCC 43589 / DSM 3109 / JCM 10099 / NBRC 100826 / MSB8).